The primary structure comprises 355 residues: Galectin-9 (355 aa).

Galectin domains lie at 17-148 (FSGT…ISFQ) and 227-355 (FITT…HVQT). A beta-D-galactoside-binding positions include N48, H61, R65, N75, 82 to 88 (WGPEERK), H267, R271, T281, and 287 to 293 (WGSEERS).

As to quaternary structure, monomer. As to expression, peripheral blood leukocytes and lymphatic tissues. Expressed in lung, liver, breast and kidney with higher levels in tumor endothelial cells than normal endothelium (at protein level). Expressed in trophoblast cells in decidua and placenta in pregnancy (at protein level). Isoform 2 is the most abundant isoform expressed in endothelial cells. Upon endothelial cell activation isoform 2 expression decreases while expression of isoform 3 and isoform 5 increases. Isoform 4 decreases in pathological pregnancy.

It localises to the cytoplasm. Its subcellular location is the nucleus. The protein localises to the secreted. In terms of biological role, binds galactosides. Has high affinity for the Forssman pentasaccharide. Ligand for HAVCR2/TIM3. Binding to HAVCR2 induces T-helper type 1 lymphocyte (Th1) death. Also stimulates bactericidal activity in infected macrophages by causing macrophage activation and IL1B secretion which restricts intracellular bacterial growth. Ligand for P4HB; the interaction retains P4HB at the cell surface of Th2 T-helper cells, increasing disulfide reductase activity at the plasma membrane, altering the plasma membrane redox state and enhancing cell migration. Ligand for CD44; the interaction enhances binding of SMAD3 to the FOXP3 promoter, leading to up-regulation of FOXP3 expression and increased induced regulatory T (iTreg) cell stability and suppressive function. Promotes ability of mesenchymal stromal cells to suppress T-cell proliferation. Expands regulatory T-cells and induces cytotoxic T-cell apoptosis following virus infection. Activates ERK1/2 phosphorylation inducing cytokine (IL-6, IL-8, IL-12) and chemokine (CCL2) production in mast and dendritic cells. Inhibits degranulation and induces apoptosis of mast cells. Induces maturation and migration of dendritic cells. Inhibits natural killer (NK) cell function. Can transform NK cell phenotype from peripheral to decidual during pregnancy. Astrocyte derived galectin-9 enhances microglial TNF production. May play a role in thymocyte-epithelial interactions relevant to the biology of the thymus. May provide the molecular basis for urate flux across cell membranes, allowing urate that is formed during purine metabolism to efflux from cells and serving as an electrogenic transporter that plays an important role in renal and gastrointestinal urate excretion. Highly selective to the anion urate. Acts as an eosinophil chemoattractant. It also inhibits angiogenesis. Suppresses IFNG production by natural killer cells. This Homo sapiens (Human) protein is Galectin-9 (LGALS9).